The following is a 353-amino-acid chain: UPF0283 membrane protein YcjF (353 aa).

A compositionally biased stretch (basic and acidic residues) spans 1-19; that stretch reads MSEPLKPRIDFAEPLKEEP. Residues 1 to 35 form a disordered region; it reads MSEPLKPRIDFAEPLKEEPTSAFKAQQTFSEAESR. A run of 3 helical transmembrane segments spans residues 70–90, 100–120, and 213–233; these read MVMG…VQWT, VALG…GSVV, and ESTL…FIAW.

Belongs to the UPF0283 family.

It localises to the cell inner membrane. This is UPF0283 membrane protein YcjF from Salmonella paratyphi B (strain ATCC BAA-1250 / SPB7).